Consider the following 287-residue polypeptide: Pyridoxal 5'-phosphate synthase subunit PdxS (287 aa).

A D-ribose 5-phosphate-binding site is contributed by Asp21. The Schiff-base intermediate with D-ribose 5-phosphate role is filled by Lys78. Gly150 contacts D-ribose 5-phosphate. Position 162 (Arg162) interacts with D-glyceraldehyde 3-phosphate. D-ribose 5-phosphate-binding positions include Gly211 and 232 to 233; that span reads GS.

This sequence belongs to the PdxS/SNZ family. In terms of assembly, in the presence of PdxT, forms a dodecamer of heterodimers.

It catalyses the reaction aldehydo-D-ribose 5-phosphate + D-glyceraldehyde 3-phosphate + L-glutamine = pyridoxal 5'-phosphate + L-glutamate + phosphate + 3 H2O + H(+). It participates in cofactor biosynthesis; pyridoxal 5'-phosphate biosynthesis. Catalyzes the formation of pyridoxal 5'-phosphate from ribose 5-phosphate (RBP), glyceraldehyde 3-phosphate (G3P) and ammonia. The ammonia is provided by the PdxT subunit. Can also use ribulose 5-phosphate and dihydroxyacetone phosphate as substrates, resulting from enzyme-catalyzed isomerization of RBP and G3P, respectively. In Francisella philomiragia subsp. philomiragia (strain ATCC 25017 / CCUG 19701 / FSC 153 / O#319-036), this protein is Pyridoxal 5'-phosphate synthase subunit PdxS.